Here is a 282-residue protein sequence, read N- to C-terminus: Prohibitin-1 (282 aa).

Positions 106-109 match the AIM motif; the sequence is YQNL.

It belongs to the prohibitin family. The mitochondrial prohibitin complex consists of two subunits (phb1 and phb2). The subunits assemble into a membrane-associated ring-shaped supercomplex of approximately 1 mDa.

It is found in the mitochondrion inner membrane. The protein resides in the cytoplasm. Its function is as follows. Prohibitin probably acts as a holdase/unfoldase for the stabilization of newly synthesized mitochondrial proteins. Involved in mitophagy; may act as an adapter for atg8 that supports mitophagosome assembly. Negatively regulates the proteolytic processing of atg32 via the i-AAA protease. Acts as a negative regulator of the m-AAA protease. This is Prohibitin-1 (phb1) from Schizosaccharomyces pombe (strain 972 / ATCC 24843) (Fission yeast).